Consider the following 317-residue polypeptide: Aspartate carbamoyltransferase catalytic subunit (317 aa).

Residues arginine 55 and threonine 56 each contribute to the carbamoyl phosphate site. Position 83 (lysine 83) interacts with L-aspartate. 3 residues coordinate carbamoyl phosphate: arginine 105, histidine 138, and glutamine 141. L-aspartate contacts are provided by arginine 171 and arginine 225. The carbamoyl phosphate site is built by glycine 266 and proline 267.

Belongs to the aspartate/ornithine carbamoyltransferase superfamily. ATCase family. In terms of assembly, heterododecamer (2C3:3R2) of six catalytic PyrB chains organized as two trimers (C3), and six regulatory PyrI chains organized as three dimers (R2).

It catalyses the reaction carbamoyl phosphate + L-aspartate = N-carbamoyl-L-aspartate + phosphate + H(+). It participates in pyrimidine metabolism; UMP biosynthesis via de novo pathway; (S)-dihydroorotate from bicarbonate: step 2/3. Functionally, catalyzes the condensation of carbamoyl phosphate and aspartate to form carbamoyl aspartate and inorganic phosphate, the committed step in the de novo pyrimidine nucleotide biosynthesis pathway. The polypeptide is Aspartate carbamoyltransferase catalytic subunit (Mycobacteroides abscessus (strain ATCC 19977 / DSM 44196 / CCUG 20993 / CIP 104536 / JCM 13569 / NCTC 13031 / TMC 1543 / L948) (Mycobacterium abscessus)).